The sequence spans 203 residues: MSEHRIPVAADKQISPPISAGEQKGCKGLKRTDLMLRFAAFVCCAVTMVVLITDKQTSAIQVPGFNNLTITKTVSFDLAKAFVYLVSAAGIGAGYTLLVLVLSIISAERSKAIAWFIFVFDQLITYVLLAAAAASTEVAYMGAHAPPEASWLKVCSLFGRFCHQLGASLVTSFISTVLFAFSAAISAYYLFSNTNVRPAYSKG.

Topologically, residues 1–31 (MSEHRIPVAADKQISPPISAGEQKGCKGLKR) are cytoplasmic. A helical transmembrane segment spans residues 32–52 (TDLMLRFAAFVCCAVTMVVLI). At 53-84 (TDKQTSAIQVPGFNNLTITKTVSFDLAKAFVY) the chain is on the extracellular side. Asn67 is a glycosylation site (N-linked (GlcNAc...) asparagine). The chain crosses the membrane as a helical span at residues 85-105 (LVSAAGIGAGYTLLVLVLSII). At 106–111 (SAERSK) the chain is on the cytoplasmic side. Residues 112–132 (AIAWFIFVFDQLITYVLLAAA) traverse the membrane as a helical segment. Topologically, residues 133–164 (AASTEVAYMGAHAPPEASWLKVCSLFGRFCHQ) are extracellular. Residues 165–185 (LGASLVTSFISTVLFAFSAAI) traverse the membrane as a helical segment. The Cytoplasmic segment spans residues 186–203 (SAYYLFSNTNVRPAYSKG).

This sequence belongs to the Casparian strip membrane proteins (CASP) family. Homodimer and heterodimers.

The protein localises to the cell membrane. This Selaginella moellendorffii (Spikemoss) protein is CASP-like protein 2U5.